The sequence spans 353 residues: Photosystem II D2 protein (353 aa).

N-acetylthreonine is present on threonine 2. At threonine 2 the chain carries Phosphothreonine. A helical transmembrane segment spans residues 41 to 61 (CAYFALGGWFTGTTFVTSWYT). Residue histidine 118 coordinates chlorophyll a. Residues 125 to 141 (GFMLRQFELARSVQLRP) form a helical membrane-spanning segment. Pheophytin a-binding residues include glutamine 130 and asparagine 143. Residues 153–166 (VFVSVFLIYPLGQS) form a helical membrane-spanning segment. Position 198 (histidine 198) interacts with chlorophyll a. Residues 208–228 (AALLCAIHGATVENTLFEDGD) form a helical membrane-spanning segment. A plastoquinone contacts are provided by histidine 215 and phenylalanine 262. Position 215 (histidine 215) interacts with Fe cation. Histidine 269 contributes to the Fe cation binding site. A helical membrane pass occupies residues 279 to 295 (GLWMSAIGVVGLALNLR).

It belongs to the reaction center PufL/M/PsbA/D family. PSII is composed of 1 copy each of membrane proteins PsbA, PsbB, PsbC, PsbD, PsbE, PsbF, PsbH, PsbI, PsbJ, PsbK, PsbL, PsbM, PsbT, PsbX, PsbY, PsbZ, Psb30/Ycf12, at least 3 peripheral proteins of the oxygen-evolving complex and a large number of cofactors. It forms dimeric complexes. The D1/D2 heterodimer binds P680, chlorophylls that are the primary electron donor of PSII, and subsequent electron acceptors. It shares a non-heme iron and each subunit binds pheophytin, quinone, additional chlorophylls, carotenoids and lipids. There is also a Cl(-1) ion associated with D1 and D2, which is required for oxygen evolution. The PSII complex binds additional chlorophylls, carotenoids and specific lipids. is required as a cofactor.

It localises to the plastid. The protein localises to the chloroplast thylakoid membrane. The catalysed reaction is 2 a plastoquinone + 4 hnu + 2 H2O = 2 a plastoquinol + O2. Functionally, photosystem II (PSII) is a light-driven water:plastoquinone oxidoreductase that uses light energy to abstract electrons from H(2)O, generating O(2) and a proton gradient subsequently used for ATP formation. It consists of a core antenna complex that captures photons, and an electron transfer chain that converts photonic excitation into a charge separation. The D1/D2 (PsbA/PsbD) reaction center heterodimer binds P680, the primary electron donor of PSII as well as several subsequent electron acceptors. D2 is needed for assembly of a stable PSII complex. The protein is Photosystem II D2 protein of Lolium perenne (Perennial ryegrass).